The primary structure comprises 561 residues: Lysine--tRNA ligase (561 aa).

Mg(2+) contacts are provided by E409 and E416.

This sequence belongs to the class-II aminoacyl-tRNA synthetase family. Homodimer. Requires Mg(2+) as cofactor.

The protein resides in the cytoplasm. It carries out the reaction tRNA(Lys) + L-lysine + ATP = L-lysyl-tRNA(Lys) + AMP + diphosphate. The sequence is that of Lysine--tRNA ligase from Nostoc sp. (strain PCC 7120 / SAG 25.82 / UTEX 2576).